The sequence spans 187 residues: Elongation factor P (187 aa).

Belongs to the elongation factor P family.

It is found in the cytoplasm. The protein operates within protein biosynthesis; polypeptide chain elongation. Functionally, involved in peptide bond synthesis. Stimulates efficient translation and peptide-bond synthesis on native or reconstituted 70S ribosomes in vitro. Probably functions indirectly by altering the affinity of the ribosome for aminoacyl-tRNA, thus increasing their reactivity as acceptors for peptidyl transferase. This is Elongation factor P from Arthrobacter sp. (strain FB24).